Reading from the N-terminus, the 345-residue chain is D-fructose 1,6-bisphosphatase class 2/sedoheptulose 1,7-bisphosphatase (345 aa).

Positions 33, 57, 97, and 100 each coordinate Mn(2+). Substrate-binding positions include 100–102, Tyr131, 176–178, and 198–200; these read EGT, RPR, and DGD. Residue Glu225 coordinates Mn(2+).

This sequence belongs to the FBPase class 2 family. Homotetramer. Mn(2+) serves as cofactor.

It carries out the reaction beta-D-fructose 1,6-bisphosphate + H2O = beta-D-fructose 6-phosphate + phosphate. The catalysed reaction is D-sedoheptulose 1,7-bisphosphate + H2O = D-sedoheptulose 7-phosphate + phosphate. Its pathway is carbohydrate biosynthesis; Calvin cycle. In terms of biological role, catalyzes the hydrolysis of fructose 1,6-bisphosphate (Fru 1,6-P2) and sedoheptulose 1,7-bisphosphate (Sed 1,7-P2) to fructose 6-phosphate and sedoheptulose 7-phosphate, respectively. In Microcystis aeruginosa (strain NIES-843 / IAM M-2473), this protein is D-fructose 1,6-bisphosphatase class 2/sedoheptulose 1,7-bisphosphatase.